The sequence spans 140 residues: Protein SamA (140 aa).

Catalysis depends on for autocatalytic cleavage activity residues serine 61 and lysine 98.

It belongs to the peptidase S24 family.

Its function is as follows. Involved in UV protection and mutation. In Salmonella typhimurium (strain LT2 / SGSC1412 / ATCC 700720), this protein is Protein SamA (samA).